We begin with the raw amino-acid sequence, 82 residues long: Defensin-like protein 208 (82 aa).

The N-terminal stretch at 1–29 (MAKNLNTVSFTVLLLVLLMASTGILETEA) is a signal peptide. Intrachain disulfides connect C38-C63, C50-C76, and C54-C78.

It belongs to the DEFL family.

It is found in the secreted. This Arabidopsis thaliana (Mouse-ear cress) protein is Defensin-like protein 208.